Here is a 125-residue protein sequence, read N- to C-terminus: Large ribosomal subunit protein bL12 (125 aa).

This sequence belongs to the bacterial ribosomal protein bL12 family. As to quaternary structure, homodimer. Part of the ribosomal stalk of the 50S ribosomal subunit. Forms a multimeric L10(L12)X complex, where L10 forms an elongated spine to which 2 to 4 L12 dimers bind in a sequential fashion. Binds GTP-bound translation factors.

Functionally, forms part of the ribosomal stalk which helps the ribosome interact with GTP-bound translation factors. Is thus essential for accurate translation. This chain is Large ribosomal subunit protein bL12, found in Chlorobium limicola (strain DSM 245 / NBRC 103803 / 6330).